The primary structure comprises 134 residues: Small ribosomal subunit protein uS8c (134 aa).

It belongs to the universal ribosomal protein uS8 family. As to quaternary structure, part of the 30S ribosomal subunit.

The protein resides in the plastid. Its subcellular location is the chloroplast. In terms of biological role, one of the primary rRNA binding proteins, it binds directly to 16S rRNA central domain where it helps coordinate assembly of the platform of the 30S subunit. This is Small ribosomal subunit protein uS8c (rps8) from Arabidopsis thaliana (Mouse-ear cress).